The following is a 717-amino-acid chain: Aryl hydrocarbon receptor nuclear translocator 2 (717 aa).

2 disordered regions span residues 1–20 and 35–74; these read MATP…PGSV and MAGA…IERR. Arg42 bears the Omega-N-methylarginine mark. The span at 63–73 shows a compositional bias: basic and acidic residues; the sequence is FSRENHSEIER. Residues 63-116 form the bHLH domain; it reads FSRENHSEIERRRRNKMTQYITELSDMVPTCSALARKPDKLTILRMAVSHMKSM. PAS domains are found at residues 134–209 and 323–393; these read TEQE…MTGR and PVCM…VKLK. The PAC domain occupies 398 to 441; it reads SVMYRFRTKNREWMLIRTSSFTFQNPYSDEIEYIICTNTNVKQL. Residues 548-717 are disordered; that stretch reads NDIQSSSSTG…DLGMFPPFSE (170 aa). Polar residues-rich tracts occupy residues 549–574 and 585–605; these read DIQS…QVAW and QIPS…TSHT. The segment covering 610-625 has biased composition (low complexity); sequence PSSYSPLSSPATSSPS. Residues 642–651 are compositionally biased toward polar residues; the sequence is SGQSSGQFQG. Residues 658–680 are compositionally biased toward low complexity; it reads SQWQSQHHGQQSGEQHSHQQPGQ.

Efficient DNA binding requires dimerization with another bHLH protein. Heterodimer with NPAS4. Heterodimer with SIM1. Heterodimer with the aryl hydrocarbon receptor (AHR) or the SIM1 protein. Interacts with TACC3.

Its subcellular location is the nucleus. In terms of biological role, transcription factor that plays a role in the development of the hypothalamo-pituitary axis, postnatal brain growth, and visual and renal function. Specifically recognizes the xenobiotic response element (XRE). This chain is Aryl hydrocarbon receptor nuclear translocator 2 (ARNT2), found in Homo sapiens (Human).